Reading from the N-terminus, the 367-residue chain is MAEEMEPLLEPTEVFMDLWSMLPYSMQQLPLPEDHSNWQELSPLEPSDPPPPPPPPPLPLAAAAPPPLNPPTPPRAAPSPVVPSTEDYGGDFDFRVGFVEAGTAKSVTCTYSPVLNKVYCRLAKPCPVQVRVGVAPPPGSSLRAVAVYKKSEHVAEVVRRCPHHERCGGGTDGLAPAQHLIRVEGNPQARYHDDETTKRHSVVVPYEPPEVGSDCTTVLYNFMCNSSCMGGMNRRPILTILTLEGPGGQLLGRRCFEVRVCACPGRDRKIEEENFRKRGGAGGVAKRAMSPPTEAPEPPKKRVLNPDNEIFYLQVRGRRRYEMLKEINEALQLAEGGSAPRPSKGRRVKVEGPQPSCGKKLLQKGSD.

Residues 1–30 form a transcription activation (acidic) region; the sequence is MAEEMEPLLEPTEVFMDLWSMLPYSMQQLP. A disordered region spans residues 30–84; the sequence is PLPEDHSNWQELSPLEPSDPPPPPPPPPLPLAAAAPPPLNPPTPPRAAPSPVVPS. The segment covering 46 to 81 has biased composition (pro residues); it reads PSDPPPPPPPPPLPLAAAAPPPLNPPTPPRAAPSPV. Residues 87–278 mediate DNA binding; it reads DYGGDFDFRV…KIEEENFRKR (192 aa). The Zn(2+) site is built by cysteine 161, histidine 164, cysteine 224, and cysteine 228. The interval 259 to 266 is interaction with DNA; the sequence is RVCACPGR. 2 disordered regions span residues 275-303 and 333-367; these read FRKR…KKRV and LAEG…KGSD. Positions 286 to 302 match the Bipartite nuclear localization signal motif; sequence KRAMSPPTEAPEPPKKR. The tract at residues 308–339 is oligomerization; sequence NEIFYLQVRGRRRYEMLKEINEALQLAEGGSA. Positions 322–333 match the Nuclear export signal motif; sequence EMLKEINEALQL. The segment at 347 to 364 is basic (repression of DNA-binding); sequence RVKVEGPQPSCGKKLLQK.

Belongs to the p53 family. Binds DNA as a homotetramer. It depends on Zn(2+) as a cofactor.

The protein localises to the cytoplasm. The protein resides in the nucleus. Its function is as follows. Multifunctional transcription factor that induces cell cycle arrest, DNA repair or apoptosis upon binding to its target DNA sequence. Acts as a tumor suppressor in many tumor types; induces growth arrest or apoptosis depending on the physiological circumstances and cell type. Negatively regulates cell division by controlling expression of a set of genes required for this process. One of the activated genes is an inhibitor of cyclin-dependent kinases. Apoptosis induction seems to be mediated either by stimulation of BAX and FAS antigen expression, or by repression of Bcl-2 expression. This Gallus gallus (Chicken) protein is Cellular tumor antigen p53 (TP53).